The sequence spans 460 residues: Bifunctional protein GlmU (460 aa).

Positions 1-237 (MSSNQYTAGA…DPDLLGVNTP (237 aa)) are pyrophosphorylase. Residues 13–16 (LAAG), Lys27, Gln78, and 83–84 (GT) each bind UDP-N-acetyl-alpha-D-glucosamine. Mg(2+) is bound at residue Asp109. Residues Gly146, Glu160, Asn177, and Asn235 each coordinate UDP-N-acetyl-alpha-D-glucosamine. Residue Asn235 coordinates Mg(2+). Positions 238 to 258 (AELMRSEELLRENIVTRHLHN) are linker. The interval 259–460 (GVHVHAAGSV…QKNLRKTRHS (202 aa)) is N-acetyltransferase. Positions 341 and 359 each coordinate UDP-N-acetyl-alpha-D-glucosamine. The Proton acceptor role is filled by His371. Tyr374 and Asn385 together coordinate UDP-N-acetyl-alpha-D-glucosamine. Residues Ala388, 394–395 (NY), Ser413, Ala431, and Arg448 each bind acetyl-CoA.

It in the N-terminal section; belongs to the N-acetylglucosamine-1-phosphate uridyltransferase family. This sequence in the C-terminal section; belongs to the transferase hexapeptide repeat family. As to quaternary structure, homotrimer. Mg(2+) is required as a cofactor.

Its subcellular location is the cytoplasm. The enzyme catalyses alpha-D-glucosamine 1-phosphate + acetyl-CoA = N-acetyl-alpha-D-glucosamine 1-phosphate + CoA + H(+). It catalyses the reaction N-acetyl-alpha-D-glucosamine 1-phosphate + UTP + H(+) = UDP-N-acetyl-alpha-D-glucosamine + diphosphate. Its pathway is nucleotide-sugar biosynthesis; UDP-N-acetyl-alpha-D-glucosamine biosynthesis; N-acetyl-alpha-D-glucosamine 1-phosphate from alpha-D-glucosamine 6-phosphate (route II): step 2/2. The protein operates within nucleotide-sugar biosynthesis; UDP-N-acetyl-alpha-D-glucosamine biosynthesis; UDP-N-acetyl-alpha-D-glucosamine from N-acetyl-alpha-D-glucosamine 1-phosphate: step 1/1. It functions in the pathway bacterial outer membrane biogenesis; LPS lipid A biosynthesis. Functionally, catalyzes the last two sequential reactions in the de novo biosynthetic pathway for UDP-N-acetylglucosamine (UDP-GlcNAc). The C-terminal domain catalyzes the transfer of acetyl group from acetyl coenzyme A to glucosamine-1-phosphate (GlcN-1-P) to produce N-acetylglucosamine-1-phosphate (GlcNAc-1-P), which is converted into UDP-GlcNAc by the transfer of uridine 5-monophosphate (from uridine 5-triphosphate), a reaction catalyzed by the N-terminal domain. The sequence is that of Bifunctional protein GlmU from Oleidesulfovibrio alaskensis (strain ATCC BAA-1058 / DSM 17464 / G20) (Desulfovibrio alaskensis).